Here is a 473-residue protein sequence, read N- to C-terminus: Proton-coupled folate transporter (473 aa).

The span at 1 to 20 (MAAPSDPPTAATPPAPPPPA) shows a compositional bias: pro residues. Residues 1–21 (MAAPSDPPTAATPPAPPPPAR) are disordered. At 1–29 (MAAPSDPPTAATPPAPPPPARRCLLAPSV) the chain is on the cytoplasmic side. Residues 30 to 48 (EPLLFLATLALGLQVPLAT) traverse the membrane as a helical segment. Over 49–90 (QYLWDRLGAERGYVGPNASSPHGCGNGSGAVDPLREEVEALV) the chain is Extracellular. 2 N-linked (GlcNAc...) asparagine glycosylation sites follow: asparagine 65 and asparagine 74. A disulfide bond links cysteine 72 and cysteine 306. The chain crosses the membrane as a helical span at residues 91–116 (AHWNLCINLGGFFVGLFSVTLFGPWS). Asparagine 98 lines the pemetrexed pocket. Residues 117-120 (DSVG) are Cytoplasmic-facing. Residues 121 to 143 (RRPVLVLPAVGMAVQAAVYLLVM) traverse the membrane as a helical segment. Residues 144-148 (YLRLH) lie on the Extracellular side of the membrane. Residues 149-162 (VAYLLLGRIISGLL) form a helical membrane-spanning segment. The Cytoplasmic segment spans residues 163–185 (GDYNLILAGCFASVADSSNQRTR). H(+) contacts are provided by aspartate 164 and glutamate 193. A helical transmembrane segment spans residues 186–211 (TFRVAILEACLGVAGMVASVGGGQWR). Glutamate 193 contributes to the pemetrexed binding site. Topologically, residues 212-216 (KAEGY) are extracellular. The chain crosses the membrane as a helical span at residues 217-235 (INPFWLVLAASLAAALYAA). The Cytoplasmic segment spans residues 236-274 (LCLQETVKQRRAAKLLTLQHYKAVYKLYTAPEDLSSRRK). The chain crosses the membrane as a helical span at residues 275–297 (LALYSLAFFLLVTVHFGTKDLYV). Histidine 289 is a binding site for H(+). Residues 298-310 (LYELGSPLCWASD) lie on the Extracellular side of the membrane. A helical membrane pass occupies residues 311–333 (LIGYGSAASYLAYLSSLGGLRLL). Position 323 (tyrosine 323) interacts with pemetrexed. Residues 334–339 (QLCLED) are Cytoplasmic-facing. The helical transmembrane segment at 340–359 (TWVAEIGLISNIAGLVVISL) threads the bilayer. The Extracellular segment spans residues 360–363 (ATTT). A helical membrane pass occupies residues 364–384 (PLMFTGYGIMFLSMAATPVIR). Topologically, residues 385–396 (AKLSKLVGETEQ) are cytoplasmic. Residues 397 to 422 (GALFASVACVEGLCSLVATGVFNSLY) traverse the membrane as a helical segment. Glutamate 407 and serine 411 together coordinate pemetrexed. At 423–430 (PSTLHFMR) the chain is on the extracellular side. The helical transmembrane segment at 431 to 449 (GFPFLFGAILLLIPAAIMG) threads the bilayer. Residues 450-473 (WIEIQDSNLQYSHFSDASSSPADG) lie on the Cytoplasmic side of the membrane.

The protein belongs to the major facilitator superfamily. SLC46A family. Monomer. As to expression, widely expressed, including brain, aorta, liver, kidney, spleen, small intestine, pancreas, ovary and testis.

The protein localises to the cell membrane. Its subcellular location is the apical cell membrane. The protein resides in the basolateral cell membrane. It localises to the endosome membrane. It is found in the cytoplasm. The enzyme catalyses folate(in) + H(+)(in) = folate(out) + H(+)(out). It catalyses the reaction (6S)-5-methyl-5,6,7,8-tetrahydrofolate(in) + H(+)(in) = (6S)-5-methyl-5,6,7,8-tetrahydrofolate(out) + H(+)(out). The catalysed reaction is methotrexate(in) + H(+)(in) = methotrexate(out) + H(+)(out). It carries out the reaction pemetrexed(in) + H(+)(in) = pemetrexed(out) + H(+)(out). Proton-coupled folate symporter that mediates folate absorption using an H(+) gradient as a driving force. Involved in the intestinal absorption of folates at the brush-border membrane of the proximal jejunum, and the transport from blood to cerebrospinal fluid across the choroid plexus. Functions at acidic pH via alternate outward- and inward-open conformation states. Protonation of residues in the outward open state primes the protein for transport. Binding of folate promotes breaking of salt bridge network and subsequent closure of the extracellular gate, leading to the inward-open state and release of protons and folate. Also able to transport antifolate drugs, such as methotrexate and pemetrexed. Also acts as a lower-affinity, pH-independent heme carrier protein and constitutes the main importer of heme in the intestine. Imports heme in the retina and retinal pigment epithelium, in neurons of the hippocampus, in hepatocytes and in the renal epithelial cells. This chain is Proton-coupled folate transporter, found in Gallus gallus (Chicken).